The chain runs to 386 residues: uncharacterized protein (386 aa).

Residues Pro355 to Cys386 are disordered. The segment covering His377–Cys386 has biased composition (basic residues).

This is an uncharacterized protein from Rickettsia prowazekii (strain Madrid E).